The sequence spans 257 residues: Putative hydro-lyase BceJ2315_40370 (257 aa).

This sequence belongs to the D-glutamate cyclase family.

This chain is Putative hydro-lyase BceJ2315_40370, found in Burkholderia cenocepacia (strain ATCC BAA-245 / DSM 16553 / LMG 16656 / NCTC 13227 / J2315 / CF5610) (Burkholderia cepacia (strain J2315)).